Reading from the N-terminus, the 105-residue chain is Putative membrane protein insertion efficiency factor (105 aa).

The tract at residues 68-105 (FHPGGLDPVPPRRNESGTEISDARPGSDGEASPGAPGL) is disordered. The span at 77 to 94 (PPRRNESGTEISDARPGS) shows a compositional bias: basic and acidic residues.

The protein belongs to the UPF0161 family.

Its subcellular location is the cell membrane. Functionally, could be involved in insertion of integral membrane proteins into the membrane. This is Putative membrane protein insertion efficiency factor from Thermobifida fusca (strain YX).